A 425-amino-acid chain; its full sequence is 1,4-beta-D-glucan glucohydrolase (425 aa).

The Proton donor role is filled by glutamate 164. The active-site Nucleophile is the glutamate 349.

Belongs to the glycosyl hydrolase 1 family. As to quaternary structure, monomer.

The enzyme catalyses Hydrolysis of (1-&gt;4)-linkages in (1-&gt;4)-beta-D-glucans, to remove successive glucose units.. It catalyses the reaction Hydrolysis of terminal, non-reducing beta-D-glucosyl residues with release of beta-D-glucose.. Its pathway is glycan metabolism; cellulose degradation. It participates in glycan metabolism; beta-D-glucan degradation. Functionally, broad substrate specificity glycosidase. Releases glucose from soluble glucooligomers, with a preference for longer oligomers; acts more readily on cellotetraose than on cellobiose. Displays similar activities towards the disaccharides lactose and cellobiose. Is also able to hydrolyze various aryl-beta-glycosides in vitro. The protein is 1,4-beta-D-glucan glucohydrolase (bglA) of Thermotoga neapolitana.